The following is a 714-amino-acid chain: DNA ligase (714 aa).

NAD(+) is bound by residues 59 to 63 (DYEYD), 108 to 109 (SL), and glutamate 139. Lysine 141 (N6-AMP-lysine intermediate) is an active-site residue. NAD(+) is bound by residues arginine 162, glutamate 200, lysine 325, and lysine 349. 4 residues coordinate Zn(2+): cysteine 443, cysteine 446, cysteine 461, and cysteine 466. One can recognise a BRCT domain in the interval 624–713 (VVENIFEGKT…IPDDLKDKVH (90 aa)).

Belongs to the NAD-dependent DNA ligase family. LigA subfamily. Mg(2+) serves as cofactor. The cofactor is Mn(2+).

The enzyme catalyses NAD(+) + (deoxyribonucleotide)n-3'-hydroxyl + 5'-phospho-(deoxyribonucleotide)m = (deoxyribonucleotide)n+m + AMP + beta-nicotinamide D-nucleotide.. Its function is as follows. DNA ligase that catalyzes the formation of phosphodiester linkages between 5'-phosphoryl and 3'-hydroxyl groups in double-stranded DNA using NAD as a coenzyme and as the energy source for the reaction. It is essential for DNA replication and repair of damaged DNA. This chain is DNA ligase, found in Persephonella marina (strain DSM 14350 / EX-H1).